We begin with the raw amino-acid sequence, 251 residues long: Putative (5-formylfuran-3-yl)methyl phosphate synthase (251 aa).

Catalysis depends on Lys29, which acts as the Schiff-base intermediate with substrate. The active-site Proton acceptor is the Lys87.

The protein belongs to the MfnB family.

It catalyses the reaction 2 D-glyceraldehyde 3-phosphate = 4-(hydroxymethyl)-2-furancarboxaldehyde phosphate + phosphate + 2 H2O. Functionally, catalyzes the formation of 4-(hydroxymethyl)-2-furancarboxaldehyde phosphate (4-HFC-P) from two molecules of glyceraldehyde-3-P (GA-3-P). The chain is Putative (5-formylfuran-3-yl)methyl phosphate synthase from Kitasatospora aureofaciens (Streptomyces aureofaciens).